Consider the following 149-residue polypeptide: Cytochrome c-556 (149 aa).

The first 20 residues, 1–20 (MLRTVIVAGALVLTASAVMA), serve as a signal peptide directing secretion. 4 residues coordinate heme c: M32, C137, C140, and H141.

Monomer. Post-translationally, binds 1 heme c group covalently per subunit.

Low-spin monoheme cytochrome c. The protein is Cytochrome c-556 of Rhodopseudomonas palustris (strain ATCC BAA-98 / CGA009).